The primary structure comprises 504 residues: Subtilisin-like protease 1 (504 aa).

Positions 1-19 (MGVFRFISISLAAVSAANA) are cleaved as a signal peptide. The propeptide occupies 20-116 (AQILSMPHAQ…VEPDTIVSVH (97 aa)). Positions 34–116 (SYIVMMKDDT…VEPDTIVSVH (83 aa)) constitute an Inhibitor I9 domain. Residues 126–400 (SWGLARISNP…NVLINNGGAK (275 aa)) enclose the Peptidase S8 domain. Residues aspartate 158 and histidine 190 each act as charge relay system in the active site. The segment at 172 to 198 (AIWGSNQVNDGDDRDGSGHGTHTSGTM) is disordered. 2 N-linked (GlcNAc...) asparagine glycosylation sites follow: asparagine 233 and asparagine 251. The span at 282-294 (NDNQDAQSSSPAS) shows a compositional bias: polar residues. The tract at residues 282–312 (NDNQDAQSSSPASEPSVCTVGSSAEDDSRSS) is disordered. Residue serine 345 is the Charge relay system of the active site. Residues 378 to 394 (TSSITDAGPGTPTNVLI) show a composition bias toward polar residues. The disordered stretch occupies residues 378-483 (TSSITDAGPG…YPGGDNFDFD (106 aa)). Pro residues-rich tracts occupy residues 405 to 449 (NPNP…PGQP) and 457 to 473 (APAP…PHTP).

The protein belongs to the peptidase S8 family.

It is found in the secreted. Functionally, secreted subtilisin-like serine protease with keratinolytic activity that contributes to pathogenicity. The polypeptide is Subtilisin-like protease 1 (SUB1) (Trichophyton rubrum (Athlete's foot fungus)).